Reading from the N-terminus, the 364-residue chain is Aminomethyltransferase (364 aa).

This sequence belongs to the GcvT family. The glycine cleavage system is composed of four proteins: P, T, L and H.

The catalysed reaction is N(6)-[(R)-S(8)-aminomethyldihydrolipoyl]-L-lysyl-[protein] + (6S)-5,6,7,8-tetrahydrofolate = N(6)-[(R)-dihydrolipoyl]-L-lysyl-[protein] + (6R)-5,10-methylene-5,6,7,8-tetrahydrofolate + NH4(+). Its function is as follows. The glycine cleavage system catalyzes the degradation of glycine. The polypeptide is Aminomethyltransferase (Shigella boydii serotype 18 (strain CDC 3083-94 / BS512)).